The primary structure comprises 566 residues: Transcription factor P14E8.02 (566 aa).

The disordered stretch occupies residues 1–32 (MNISSQNVLLPSPIPSSSPMASHKKSWLSKHP). Phosphoserine is present on Ser-73. The FHA domain occupies 86-137 (NKIGRSSQQCDHVLSTVDKAISRVHAIVTCTQDRMIIECVGWNGMIVSDKMR). Disordered regions lie at residues 191 to 217 (EENR…SQDY), 269 to 291 (DCSK…LLNG), 312 to 334 (ESDD…IEES), and 364 to 437 (FTNH…TKEN). Over residues 314-330 (DDLDKNEEISEGEEYTP) the composition is skewed to acidic residues. Polar residues-rich tracts occupy residues 373-383 (NSNITTSNDSP) and 414-428 (DENT…PSSH). Phosphoserine is present on residues Ser-379 and Ser-382.

The protein belongs to the PLM2/TOS4 family.

It is found in the nucleus. Functionally, probable transcriptional regulatory protein Required for G1/S progression. This chain is Transcription factor P14E8.02, found in Schizosaccharomyces pombe (strain 972 / ATCC 24843) (Fission yeast).